Reading from the N-terminus, the 307-residue chain is MPGTDDVAVDVASVYSAIEKSAGLLDVTAAREVVWPVLTAFEDVLEQAVIAFRVATNARHEGDFDVRFTVPEEVDPYAVALSRSLIAKTDHPVGSLLSDIQQLCSVDTYGVDLGVKSGFKKVWVYFPAGEHETLARLTGLTSMPGSLAGNVDFFTRYGLADKVDVIGIDYRSRTMNVYFAAPSECFERETVLAMHRDIGLPSPSEQMFKFCENSFGLYTTLNWDTMEIERISYGVKTENPMTFFARLGTKVEHFVKNVPYGVDTQKMVYAAVTSSGEEYYKLQSYYRWRSVSRLNAAYIAARDKEST.

Belongs to the aromatic prenyltransferase family. Monomer.

The enzyme catalyses 2-O,3-dimethylflaviolin + (2E)-geranyl diphosphate = 6-linalyl-2-O,3-dimethylflaviolin + diphosphate. It catalyses the reaction 2-O,3-dimethylflaviolin + (2E)-geranyl diphosphate + H(+) = 7-O-geranyl-2-O,3-dimethylflaviolin + diphosphate. Does not require any metal cations for activity. Its function is as follows. Involved in the biosynthesis of furaquinocin. Catalyzes the transfer of a geranyl group to 2-methoxy-3-methyl-flaviolin to yield 6-prenyl-2-methoxy-3-methyl-flaviolin and 7-O-geranyl-2-methoxy-3-methyl-flaviolin in a 10:1 ratio. Can also use other substrates such as flaviolin or 1,3-dihydroxy naphthalene, and can also use DMAPP as prenyl donor. The sequence is that of Furaquinocin biosynthesis prenyltransferase from Streptomyces sp. (strain KO-3988).